The sequence spans 363 residues: Histidinol-phosphate aminotransferase (363 aa).

Residue Lys-227 is modified to N6-(pyridoxal phosphate)lysine.

It belongs to the class-II pyridoxal-phosphate-dependent aminotransferase family. Histidinol-phosphate aminotransferase subfamily. As to quaternary structure, homodimer. It depends on pyridoxal 5'-phosphate as a cofactor.

It carries out the reaction L-histidinol phosphate + 2-oxoglutarate = 3-(imidazol-4-yl)-2-oxopropyl phosphate + L-glutamate. It participates in amino-acid biosynthesis; L-histidine biosynthesis; L-histidine from 5-phospho-alpha-D-ribose 1-diphosphate: step 7/9. This Akkermansia muciniphila (strain ATCC BAA-835 / DSM 22959 / JCM 33894 / BCRC 81048 / CCUG 64013 / CIP 107961 / Muc) protein is Histidinol-phosphate aminotransferase.